Reading from the N-terminus, the 71-residue chain is Antitoxin ParD2 (71 aa).

Functionally, antitoxin component of a type II toxin-antitoxin (TA) system. The protein is Antitoxin ParD2 (parD2) of Mycobacterium tuberculosis (strain CDC 1551 / Oshkosh).